The chain runs to 277 residues: Caspase-3 (277 aa).

M1 carries the N-acetylmethionine modification. 2 propeptides span residues 1–9 (MENTENSVD) and 10–28 (AKSF…KSMD). K11 is subject to N6-acetyllysine. S26 carries the phosphoserine modification. Catalysis depends on residues H121 and C163. C163 carries the S-nitrosocysteine; in inhibited form modification.

This sequence belongs to the peptidase C14A family. As to quaternary structure, heterotetramer that consists of two anti-parallel arranged heterodimers, each one formed by a 17 kDa (p17) and a 12 kDa (p12) subunit. Interacts with BIRC6/bruce. In terms of processing, cleavage by granzyme B, caspase-6, caspase-8 and caspase-10 generates the two active subunits. Additional processing of the propeptides is likely due to the autocatalytic activity of the activated protease. Active heterodimers between the small subunit of caspase-7 protease and the large subunit of caspase-3 also occur and vice versa. Post-translationally, S-nitrosylated on its catalytic site cysteine in unstimulated cell lines and denitrosylated upon activation of the Fas apoptotic pathway, associated with an increase in intracellular caspase activity. Fas therefore activates caspase-3 not only by inducing the cleavage of the caspase zymogen to its active subunits, but also by stimulating the denitrosylation of its active site thiol. Ubiquitinated by BIRC6; this activity is inhibited by DIABLO/SMAC.

The protein localises to the cytoplasm. It carries out the reaction Strict requirement for an Asp residue at positions P1 and P4. It has a preferred cleavage sequence of Asp-Xaa-Xaa-Asp-|- with a hydrophobic amino-acid residue at P2 and a hydrophilic amino-acid residue at P3, although Val or Ala are also accepted at this position.. Inhibited by BIRC6; following inhibition of BIRC6-caspase binding by DIABLO/SMAC, BIRC6 is subjected to caspase cleavage, leading to an increase in active caspases. Its function is as follows. Involved in the activation cascade of caspases responsible for apoptosis execution. At the onset of apoptosis, it proteolytically cleaves poly(ADP-ribose) polymerase PARP1 at a '216-Asp-|-Gly-217' bond. Cleaves and activates sterol regulatory element binding proteins (SREBPs) between the basic helix-loop-helix leucine zipper domain and the membrane attachment domain. Cleaves and activates caspase-6, -7 and -9 (CASP6, CASP7 and CASP9, respectively). Cleaves and inactivates interleukin-18 (IL18). Triggers cell adhesion in sympathetic neurons through RET cleavage. Cleaves IL-1 beta between an Asp and an Ala, releasing the mature cytokine which is involved in a variety of inflammatory processes. Cleaves and inhibits serine/threonine-protein kinase AKT1 in response to oxidative stress. Acts as an inhibitor of type I interferon production during virus-induced apoptosis by mediating cleavage of antiviral proteins CGAS, IRF3 and MAVS, thereby preventing cytokine overproduction. Also involved in pyroptosis by mediating cleavage and activation of gasdermin-E (GSDME). Cleaves XRCC4 and phospholipid scramblase proteins XKR4, XKR8 and XKR9, leading to promote phosphatidylserine exposure on apoptotic cell surface. Cleaves BIRC6 following inhibition of BIRC6-caspase binding by DIABLO/SMAC. The sequence is that of Caspase-3 (CASP3) from Canis lupus familiaris (Dog).